Consider the following 339-residue polypeptide: Tetraacyldisaccharide 4'-kinase (339 aa).

Residue 61-68 (TAGGTGKT) participates in ATP binding.

Belongs to the LpxK family.

The enzyme catalyses a lipid A disaccharide + ATP = a lipid IVA + ADP + H(+). It functions in the pathway glycolipid biosynthesis; lipid IV(A) biosynthesis; lipid IV(A) from (3R)-3-hydroxytetradecanoyl-[acyl-carrier-protein] and UDP-N-acetyl-alpha-D-glucosamine: step 6/6. Its function is as follows. Transfers the gamma-phosphate of ATP to the 4'-position of a tetraacyldisaccharide 1-phosphate intermediate (termed DS-1-P) to form tetraacyldisaccharide 1,4'-bis-phosphate (lipid IVA). The chain is Tetraacyldisaccharide 4'-kinase from Stenotrophomonas maltophilia (strain R551-3).